We begin with the raw amino-acid sequence, 822 residues long: MMDYDDARGERPRLLVVANRLPVSAKRTGENSWSLEMSPGGLVSGLLGITSQFDTKWVGWPGVDVHDEIEKNALTESLAEMKCIPVFLNGVFDQYYNGYCNGILWPILHHMGLPQEDQHDTNQTFETQYDAYKKANRMFLDVIIDNYEEGDIVWCHDYHLMFLPQYLKEYNNKIKVGWFLHSPFPSSEVYKTLPSRSELLRAILAADLLGFHTYDFARHFLSTCTRILGVEGTHEGVVYQGRVTRVAVFPIGIDPDRFIRTCKLPEVTQQMNELQEKFAGKKVILGVDRLDMIKGIPQKYLAFEKFLEENPYWRDKVVLVQIAVPTRNDVPEYRKLKSQVHGLVGRINGRFGSVSSLPIHHLDCSVDFNYLCAIYAIADVMLVTSLRDGMNLVSYEFVACQEAKKGVLVLSEFAGAGQSLGVGALIVNPWDVTEVSSAIKEALNMPAEERETRHRSNFQYVCTHSAEKWGLDFMSELNGIIPESEMQMRKIPLQLPEQDVIQQYSQSNNRLIILGFFGTLAEPMNSGTKEMDLKLNPELKGTLKALCNDPKTTVVVLSRSGKNILNKNFGESNIWLAAENGMFEKQTTGEWVTNMPQNVNLDWVDGVKNVFKYFTDRTPRSYFEASETSLVWNYEYADVEFGRAQARDLLQYLWAGPISNASVDVVRGNHSVEVHAIGETKGAAIGRILGEIVHRKSMTTPIDFVFCSGYFLEKDEDIYTFFESKILSSKSPNGLDLKKENYFSAAIGQARTKARYVIDSAHGVVDLLHKLAVVADTTMTDSFSDSEIYEPRDANANENSKRWINSVRRRKVEIGDTGQIGM.

Positions 12 to 479 (PRLLVVANRL…GLDFMSELNG (468 aa)) are glycosyltransferase.

The protein in the N-terminal section; belongs to the glycosyltransferase 20 family. In the C-terminal section; belongs to the trehalose phosphatase family.

It carries out the reaction D-glucose 6-phosphate + UDP-alpha-D-glucose = alpha,alpha-trehalose 6-phosphate + UDP + H(+). The polypeptide is Probable alpha,alpha-trehalose-phosphate synthase [UDP-forming] 2 (TPS2) (Arabidopsis thaliana (Mouse-ear cress)).